A 176-amino-acid polypeptide reads, in one-letter code: ATP-dependent protease subunit HslV (176 aa).

Residue T6 is part of the active site. Residues S161, C164, and T167 each coordinate Na(+).

Belongs to the peptidase T1B family. HslV subfamily. As to quaternary structure, a double ring-shaped homohexamer of HslV is capped on each side by a ring-shaped HslU homohexamer. The assembly of the HslU/HslV complex is dependent on binding of ATP.

It is found in the cytoplasm. The enzyme catalyses ATP-dependent cleavage of peptide bonds with broad specificity.. Allosterically activated by HslU binding. Functionally, protease subunit of a proteasome-like degradation complex believed to be a general protein degrading machinery. This Aquifex aeolicus (strain VF5) protein is ATP-dependent protease subunit HslV.